Consider the following 224-residue polypeptide: BOS complex subunit TMEM147 (224 aa).

A helical membrane pass occupies residues 1 to 21 (MTLFHFGNCFALAYFPYFITY). Residues 22 to 34 (KCSGLSEYNAFWK) are Cytoplasmic-facing. The chain crosses the membrane as a helical span at residues 35–58 (CVQAGVTYLFVQLCKMLFLATFFP). At 59 to 66 (TWEGGIYD) the chain is on the lumenal side. Residues 67–88 (FIGEFMKASVDVADLIGLNLVM) traverse the membrane as a helical segment. At 89 to 98 (SRNAGKGEYK) the chain is on the cytoplasmic side. A helical transmembrane segment spans residues 99–124 (IMVAALGWATAELIMSRCIPLWVGAR). The Lumenal portion of the chain corresponds to 125 to 129 (GIEFD). The chain crosses the membrane as a helical span at residues 130-155 (WKYIQMSIDSNISLVHYIVASAQVWM). The Cytoplasmic portion of the chain corresponds to 156 to 164 (ITRYDLYHT). Residues 165–187 (FRPAVLLLMFLSVYKAFVMETFV) form a helical membrane-spanning segment. Residues 188 to 194 (HLCSLGS) are Lumenal-facing. A helical transmembrane segment spans residues 195-216 (WTALLARAVVTGLLALSTLALY). Residues 217–224 (VAVVNVHS) are Cytoplasmic-facing.

This sequence belongs to the TMEM147 family. Component of the back of Sec61 (BOS) complex, composed of NCLN/Nicalin, NOMO1 and TMEM147. The BOS complex is part of the multi-pass translocon (MPT) complex, composed of three subcomplexes, the GEL complex (composed of RAB5IF/OPTI and TMCO1), the BOS complex (composed of NCLN/Nicalin, NOMO1 and TMEM147) and the PAT complex (composed of WDR83OS/Asterix and CCDC47). The MPT complex associates with the SEC61 complex. Interacts with CHRM3, CHRM1 and AVPR2. Interacts with LBR; promoting LBR localization to the nucleus inner membrane. Interacts with DHCR7.

The protein localises to the endoplasmic reticulum membrane. It localises to the nucleus membrane. The protein resides in the cell membrane. In terms of biological role, component of the multi-pass translocon (MPT) complex that mediates insertion of multi-pass membrane proteins into the lipid bilayer of membranes. The MPT complex takes over after the SEC61 complex: following membrane insertion of the first few transmembrane segments of proteins by the SEC61 complex, the MPT complex occludes the lateral gate of the SEC61 complex to promote insertion of subsequent transmembrane regions. Also acts as a negative regulator of CHRM3 function, most likely by interfering with its trafficking to the cell membrane. Negatively regulates CHRM3-mediated calcium mobilization and activation of RPS6KA1/p90RSK activity. Regulates LBR localization to the nucleus inner membrane. The sequence is that of BOS complex subunit TMEM147 from Canis lupus familiaris (Dog).